Consider the following 238-residue polypeptide: Formate dehydrogenase, cytochrome b556 subunit (238 aa).

2 residues coordinate heme b: His23 and His62. 4 helical membrane passes run 23-43 (HWML…FFFP), 60-80 (AIHP…ALLY), 120-140 (MLFW…IIMW), and 155-175 (IAIL…LVHI). Residues His160 and His174 each coordinate heme b.

The protein belongs to the formate dehydrogenase gamma subunit family. As to quaternary structure, formate dehydrogenase is a membrane-bound complex, formed by subunits alpha, beta and gamma. Heme is required as a cofactor.

The protein localises to the cell membrane. In terms of biological role, allows to use formate as major electron donor during anaerobic respiration. Subunit gamma is probably the cytochrome b556(FDO) component of the formate dehydrogenase. This Haemophilus influenzae (strain ATCC 51907 / DSM 11121 / KW20 / Rd) protein is Formate dehydrogenase, cytochrome b556 subunit (fdxI).